Here is a 454-residue protein sequence, read N- to C-terminus: Protein translocase subunit SecY (454 aa).

Transmembrane regions (helical) follow at residues 43–63, 97–117, 144–164, 168–188, 201–221, 226–246, 289–309, 334–354, 390–410, and 414–434; these read LTIALLVFIIKIGMAIPLPYI, FTLGITPSINASIILQLAFVI, TLLLAITQSVFLIFSLRAFIF, ILKLFELSCVLSSGAMIILWI, SSFLIFLNIVSVLPEQIGMSF, IFSFEGLIVILTFSITVWAAI, PVVFASYLIPILKTGGIYILL, IVEAGLICLFALFYSGLIIDP, LIGALILAFNVVLLNLVGFVF, and IFKGFSIGSQIILLGVVTEIL.

Belongs to the SecY/SEC61-alpha family. Component of the plastid Sec protein translocase complex, which is composed of at least SecY and SecE.

The protein localises to the plastid. Its subcellular location is the chloroplast thylakoid membrane. In terms of biological role, the central subunit of the protein translocation channel SecYE. Consists of two halves formed by TMs 1-5 and 6-10. These two domains form a lateral gate at the front which open onto the bilayer between TMs 2 and 7, and are clamped together by SecE at the back. The channel is closed by both a pore ring composed of hydrophobic SecY resides and a short helix (helix 2A) on the extracellular side of the membrane which forms a plug. The sequence is that of Protein translocase subunit SecY from Heterosigma akashiwo (strain NIES-293 / 8280G21-1).